The following is a 326-amino-acid chain: MLAWALLSAVLWSLAGVGSARSSLFSNEGFVYGTVGHPVKIYVKLHQTSPVLVCMDIDRASKETVDPIYLWIGPNENTLTGSSQINITNIGELVLKDFMESLSGHYSCTLSYKIVKAETQEETSLKKKYDFLVFAYREPDYSYRMAVRFTTKSCVGRYNDLLFRLLKKILDNLISDLLCHVIEPSYKCHSVKIPERDFVYELFVAFQVNPFAPGWKSMCNSSMDCEDVTNHNILKARDRIEEFFRSQAYILHHHFNITVPAMHFVDHSFQVTRIDNCRPGFGKNEGLHSNCASCCVVCSPGTFSPDMDVTCQTCVSAHVYGAKACP.

Positions Met1–Ala20 are cleaved as a signal peptide. Residues Asn86, Asn220, and Asn256 are each glycosylated (N-linked (GlcNAc...) asparagine).

It belongs to the zona pellucida-binding protein Sp38 family. N-glycosylated.

The protein localises to the secreted. It localises to the cytoplasmic vesicle. It is found in the secretory vesicle. Its subcellular location is the acrosome. In terms of biological role, is implicated in sperm-oocyte interaction during fertilization. The polypeptide is Zona pellucida-binding protein 2 (Zpbp2) (Rattus norvegicus (Rat)).